The sequence spans 1055 residues: DNA-directed RNA polymerase subunit beta' (1055 aa).

C60, C62, C75, and C78 together coordinate Zn(2+). Mg(2+) contacts are provided by D449, D451, and D453. The Zn(2+) site is built by C818, C892, C899, and C902.

Belongs to the RNA polymerase beta' chain family. As to quaternary structure, the RNAP catalytic core consists of 2 alpha, 1 beta, 1 beta' and 1 omega subunit. When a sigma factor is associated with the core the holoenzyme is formed, which can initiate transcription. Requires Mg(2+) as cofactor. Zn(2+) serves as cofactor.

The enzyme catalyses RNA(n) + a ribonucleoside 5'-triphosphate = RNA(n+1) + diphosphate. Its function is as follows. DNA-dependent RNA polymerase catalyzes the transcription of DNA into RNA using the four ribonucleoside triphosphates as substrates. This is DNA-directed RNA polymerase subunit beta' from Pediococcus acidilactici.